The primary structure comprises 240 residues: Uridylate kinase (240 aa).

Residue 12 to 15 coordinates ATP; that stretch reads KLSG. The interval 20–25 is involved in allosteric activation by GTP; that stretch reads GEQGFG. Residue Gly-54 coordinates UMP. Positions 55 and 59 each coordinate ATP. UMP is bound by residues Asp-74 and 135–142; that span reads TGNPYFST. ATP-binding residues include Asn-163, Tyr-169, and Asp-172.

The protein belongs to the UMP kinase family. In terms of assembly, homohexamer.

The protein resides in the cytoplasm. The enzyme catalyses UMP + ATP = UDP + ADP. The protein operates within pyrimidine metabolism; CTP biosynthesis via de novo pathway; UDP from UMP (UMPK route): step 1/1. With respect to regulation, allosterically activated by GTP. Inhibited by UTP. In terms of biological role, catalyzes the reversible phosphorylation of UMP to UDP. This chain is Uridylate kinase, found in Bacillus anthracis.